The sequence spans 291 residues: 3-hydroxy-5-phosphonooxypentane-2,4-dione thiolase (291 aa).

Catalysis depends on Lys203, which acts as the Schiff-base intermediate with substrate.

Belongs to the DeoC/FbaB aldolase family. Homodecamer.

The protein resides in the cytoplasm. It catalyses the reaction dihydroxyacetone phosphate + acetyl-CoA = 3-hydroxy-2,4-dioxopentyl phosphate + CoA. In terms of biological role, involved in the degradation of phospho-AI-2, thereby terminating induction of the lsr operon and closing the AI-2 signaling cycle. Catalyzes the transfer of an acetyl moiety from 3-hydroxy-5-phosphonooxypentane-2,4-dione to CoA to form glycerone phosphate and acetyl-CoA. The sequence is that of 3-hydroxy-5-phosphonooxypentane-2,4-dione thiolase from Salmonella paratyphi A (strain ATCC 9150 / SARB42).